Reading from the N-terminus, the 1459-residue chain is PPE family protein PPE34 (1459 aa).

This sequence belongs to the mycobacterial PPE family. In terms of assembly, interacts with human TLR2.

The protein localises to the cell membrane. It localises to the secreted. It is found in the cell wall. Its subcellular location is the cell surface. Its function is as follows. Facilitates a shift in the ensuing immunity toward the Th2 phenotype and could aid in immune evasion by mycobacteria. Interacts with human Toll-like receptor 2 (TLR2) and triggers functional maturation of human dendritic cells (DCs), leading to secretion of IL-4, IL-5 and IL-10 from CD4(+) T cells and induction of Th2 immune response. Maturation of DCs involves PI3K, ERK1/2, p38 MAPK and NF-kappa-B signaling pathways. The polypeptide is PPE family protein PPE34 (Mycobacterium tuberculosis (strain ATCC 25618 / H37Rv)).